Consider the following 479-residue polypeptide: MSEGEIVQVIGPVVDVKFPIDKNLPDINNALRVIKSEDESIVLEVTLELGDGVLRTIAMESTDGLRRGMKVEDTGAPISVPVGEDTLGRVFNVLGQPIDGGPAFPKDHPREGIHKEAPKYEDLTTSREILETGIKVIDLLEPYVRGGKVGLFGGAGVGKTTIIQELIHNIAQEHGGISVFTGVGERTREGNDLYFEMKASGVLSKTAMVFGQMNEPPGARMRVALTGLTLAEYFRDVEGQDVLLFIDNIFRFTQAGSEVSALLGRMPSAVGYQPTLATEMGQLQERITSTKKGSITSIQAVYVPADDYTDPAPSTTFAYLDATTNLERSLVEQGIYPAVDPLESSSSALDPEVVGQEHYEVATRVQHVLQRYHELQDIISVLGMDELSDEEKLIVARARKVQFFLSQNFFVAEQFTGVPGSYVPIKETIKGFKLILDGHLDDLPEDAFRGVGPIEDVLKKAQEMGVTPSDPEAKALLEK.

Position 153-160 (153-160) interacts with ATP; that stretch reads GGAGVGKT.

The protein belongs to the ATPase alpha/beta chains family. In terms of assembly, F-type ATPases have 2 components, CF(1) - the catalytic core - and CF(0) - the membrane proton channel. CF(1) has five subunits: alpha(3), beta(3), gamma(1), delta(1), epsilon(1). CF(0) has three main subunits: a(1), b(2) and c(9-12). The alpha and beta chains form an alternating ring which encloses part of the gamma chain. CF(1) is attached to CF(0) by a central stalk formed by the gamma and epsilon chains, while a peripheral stalk is formed by the delta and b chains.

The protein resides in the cell membrane. It catalyses the reaction ATP + H2O + 4 H(+)(in) = ADP + phosphate + 5 H(+)(out). Increases 2-fold following exposure to low pH. In terms of biological role, produces ATP from ADP in the presence of a proton gradient across the membrane. The catalytic sites are hosted primarily by the beta subunits. In Lactobacillus acidophilus (strain ATCC 700396 / NCK56 / N2 / NCFM), this protein is ATP synthase subunit beta.